Here is a 366-residue protein sequence, read N- to C-terminus: MSMNSFGHLFRVTTWGESHGPALGATVDGCPPGVPIEEAMIQHWLDRRKPGQNKYTTQRREADEVKILSGVFEGQTTGTPVQLMIENTDQRSKDYGDIKDKFRPGHADITYFQKYGIRDYRGGGRSSARETAARVAAGGLAREAIRALAPNAQITGYMVQMGPHRIDRARFDWAQIEQNPFWVPDAQAASDWADYLDGLRKSGSSVGAVIEVVARGVPAGLGAPVYGKLDTDLAAAMMSINAVKGVEIGEGMAAAELTGEANADEIFMGQNGPQYSSNHAGGILGGISTGQDIVVRFAVKPTSSILTTRKTITKSGEETEIITKGRHDPCVGIRAVPVGEAMMACVILDHLLLHRGQIGANRGHIG.

Residue R48 participates in NADP(+) binding. FMN-binding positions include 125-127 (RSS), 241-242 (NA), G285, 300-304 (KPTSS), and R326.

This sequence belongs to the chorismate synthase family. Homotetramer. FMNH2 is required as a cofactor.

The enzyme catalyses 5-O-(1-carboxyvinyl)-3-phosphoshikimate = chorismate + phosphate. It functions in the pathway metabolic intermediate biosynthesis; chorismate biosynthesis; chorismate from D-erythrose 4-phosphate and phosphoenolpyruvate: step 7/7. Catalyzes the anti-1,4-elimination of the C-3 phosphate and the C-6 proR hydrogen from 5-enolpyruvylshikimate-3-phosphate (EPSP) to yield chorismate, which is the branch point compound that serves as the starting substrate for the three terminal pathways of aromatic amino acid biosynthesis. This reaction introduces a second double bond into the aromatic ring system. The protein is Chorismate synthase of Ruegeria pomeroyi (strain ATCC 700808 / DSM 15171 / DSS-3) (Silicibacter pomeroyi).